Consider the following 211-residue polypeptide: Protein-methionine-sulfoxide reductase heme-binding subunit MsrQ (211 aa).

5 helical membrane passes run 17-37, 82-102, 116-136, 153-173, and 178-198; these read LAGL…GLGA, LWCF…ELGV, PYLT…FTST, FVYL…KIIS, and IYAG…LSLF.

It belongs to the MsrQ family. Heterodimer of a catalytic subunit (MsrP) and a heme-binding subunit (MsrQ). Requires FMN as cofactor. The cofactor is heme b.

The protein localises to the cell inner membrane. In terms of biological role, part of the MsrPQ system that repairs oxidized periplasmic proteins containing methionine sulfoxide residues (Met-O), using respiratory chain electrons. Thus protects these proteins from oxidative-stress damage caused by reactive species of oxygen and chlorine generated by the host defense mechanisms. MsrPQ is essential for the maintenance of envelope integrity under bleach stress, rescuing a wide series of structurally unrelated periplasmic proteins from methionine oxidation, including the primary periplasmic chaperone SurA and the lipoprotein Pal. MsrQ provides electrons for reduction to the reductase catalytic subunit MsrP, using the quinone pool of the respiratory chain. The protein is Protein-methionine-sulfoxide reductase heme-binding subunit MsrQ of Shigella boydii serotype 4 (strain Sb227).